The sequence spans 399 residues: Coenzyme A biosynthesis bifunctional protein CoaBC (399 aa).

A phosphopantothenoylcysteine decarboxylase region spans residues 1-190 (MQSLAGKKIL…FAPKILVGKR (190 aa)). Catalysis depends on cysteine 159, which acts as the Proton donor. The tract at residues 191–399 (VLITAGPTRE…AVMHLIHEQM (209 aa)) is phosphopantothenate--cysteine ligase. CTP contacts are provided by residues aspartate 279, lysine 289, 307 to 310 (PDIV), phenylalanine 326, lysine 340, and lysine 344.

The protein in the N-terminal section; belongs to the HFCD (homo-oligomeric flavin containing Cys decarboxylase) superfamily. This sequence in the C-terminal section; belongs to the PPC synthetase family. The cofactor is Mg(2+). FMN serves as cofactor.

The enzyme catalyses N-[(R)-4-phosphopantothenoyl]-L-cysteine + H(+) = (R)-4'-phosphopantetheine + CO2. It catalyses the reaction (R)-4'-phosphopantothenate + L-cysteine + CTP = N-[(R)-4-phosphopantothenoyl]-L-cysteine + CMP + diphosphate + H(+). It functions in the pathway cofactor biosynthesis; coenzyme A biosynthesis; CoA from (R)-pantothenate: step 2/5. It participates in cofactor biosynthesis; coenzyme A biosynthesis; CoA from (R)-pantothenate: step 3/5. In terms of biological role, catalyzes two sequential steps in the biosynthesis of coenzyme A. In the first step cysteine is conjugated to 4'-phosphopantothenate to form 4-phosphopantothenoylcysteine. In the second step the latter compound is decarboxylated to form 4'-phosphopantotheine. This Vibrio cholerae serotype O1 (strain ATCC 39315 / El Tor Inaba N16961) protein is Coenzyme A biosynthesis bifunctional protein CoaBC.